Consider the following 413-residue polypeptide: Tyrosine--tRNA ligase (413 aa).

Residues 59–68 (PTAPDIHLGH) carry the 'HIGH' region motif. The short motif at 243–247 (KMSKS) is the 'KMSKS' region element. Lys-246 is a binding site for ATP. The region spanning 351–411 (LAIGQLLKQA…GKRRFARVTL (61 aa)) is the S4 RNA-binding domain.

Belongs to the class-I aminoacyl-tRNA synthetase family. TyrS type 2 subfamily. As to quaternary structure, homodimer.

It localises to the cytoplasm. It catalyses the reaction tRNA(Tyr) + L-tyrosine + ATP = L-tyrosyl-tRNA(Tyr) + AMP + diphosphate + H(+). Functionally, catalyzes the attachment of tyrosine to tRNA(Tyr) in a two-step reaction: tyrosine is first activated by ATP to form Tyr-AMP and then transferred to the acceptor end of tRNA(Tyr). The chain is Tyrosine--tRNA ligase from Burkholderia pseudomallei (strain K96243).